A 367-amino-acid chain; its full sequence is Ribosomal lysine N-methyltransferase 5 (367 aa).

The disordered stretch occupies residues 55-74 (EGGRKKKRVRRRNKASSVEE). The segment covering 58-68 (RKKKRVRRRNK) has biased composition (basic residues). Residues W110, 170–172 (GAG), D192, W256, and M288 each bind S-adenosyl-L-methionine.

The protein belongs to the class I-like SAM-binding methyltransferase superfamily. RKM5 family.

In terms of biological role, S-adenosyl-L-methionine-dependent protein-lysine N-methyltransferase that monomethylates 60S ribosomal protein L1 (RPL1A and RPL1B) at 'Lys-46'. The sequence is that of Ribosomal lysine N-methyltransferase 5 (RKM5) from Saccharomyces cerevisiae (strain RM11-1a) (Baker's yeast).